A 299-amino-acid chain; its full sequence is Phosphoribosylaminoimidazole-succinocarboxamide synthase (299 aa).

Positions 259–279 (PESGWDRKSEQPPPPLPQHVV) are disordered.

This sequence belongs to the SAICAR synthetase family.

The catalysed reaction is 5-amino-1-(5-phospho-D-ribosyl)imidazole-4-carboxylate + L-aspartate + ATP = (2S)-2-[5-amino-1-(5-phospho-beta-D-ribosyl)imidazole-4-carboxamido]succinate + ADP + phosphate + 2 H(+). The protein operates within purine metabolism; IMP biosynthesis via de novo pathway; 5-amino-1-(5-phospho-D-ribosyl)imidazole-4-carboxamide from 5-amino-1-(5-phospho-D-ribosyl)imidazole-4-carboxylate: step 1/2. The protein is Phosphoribosylaminoimidazole-succinocarboxamide synthase of Streptomyces avermitilis (strain ATCC 31267 / DSM 46492 / JCM 5070 / NBRC 14893 / NCIMB 12804 / NRRL 8165 / MA-4680).